A 906-amino-acid chain; its full sequence is Probable disease resistance RPP8-like protein 2 (906 aa).

Residues 15-68 are a coiled coil; that stretch reads ELLSRESARLNGIDEQVDGLKRQLGRLQSLLKDADAKKNETERVRNFLEDVKDI. Residues 144–454 form the NB-ARC domain; the sequence is LQERQREIRQ…AEGIITPFHD (311 aa). 190–197 contributes to the ATP binding site; sequence GMGGIGKT. LRR repeat units lie at residues 573–597, 598–621, 623–644, 646–671, 672–696, 704–727, 740–766, 767–790, 791–818, and 840–865; these read LPLL…SIGD, LIHL…LGNL, LLLC…NVLK, MQEL…DLVN, LESL…KLSV, ECTF…SFHD, LLVL…QYRF, PPHL…ILEK, LLHL…GFPQ, and MPCL…KYVT.

Belongs to the disease resistance NB-LRR family. RPP8/HRT subfamily.

Functionally, potential disease resistance protein. This Arabidopsis thaliana (Mouse-ear cress) protein is Probable disease resistance RPP8-like protein 2 (RPP8L2).